The chain runs to 615 residues: 1-deoxy-D-xylulose-5-phosphate synthase (615 aa).

Thiamine diphosphate contacts are provided by residues H72 and 113-115 (GHA). Residue D144 coordinates Mg(2+). Thiamine diphosphate-binding positions include 145 to 146 (GA), N173, Y281, and E360. Residue N173 coordinates Mg(2+).

This sequence belongs to the transketolase family. DXPS subfamily. Homodimer. It depends on Mg(2+) as a cofactor. Requires thiamine diphosphate as cofactor.

The enzyme catalyses D-glyceraldehyde 3-phosphate + pyruvate + H(+) = 1-deoxy-D-xylulose 5-phosphate + CO2. It functions in the pathway metabolic intermediate biosynthesis; 1-deoxy-D-xylulose 5-phosphate biosynthesis; 1-deoxy-D-xylulose 5-phosphate from D-glyceraldehyde 3-phosphate and pyruvate: step 1/1. Catalyzes the acyloin condensation reaction between C atoms 2 and 3 of pyruvate and glyceraldehyde 3-phosphate to yield 1-deoxy-D-xylulose-5-phosphate (DXP). In Thermus thermophilus (strain ATCC 27634 / DSM 579 / HB8), this protein is 1-deoxy-D-xylulose-5-phosphate synthase.